Consider the following 749-residue polypeptide: Cytosolic phospholipase A2 (749 aa).

Residues 1–178 (MSFIDPYQHI…MKKLLGPKNS (178 aa)) are phospholipid binding. Serine 2 is subject to Phosphoserine. The region spanning 6–122 (PYQHIIVEHQ…KVGEKKEVPF (117 aa)) is the C2 domain. Positions 40, 41, 43, 65, 93, 94, and 95 each coordinate Ca(2+). Residues 140–740 (SCPDLRFSMA…SNVEARRFFN (601 aa)) enclose the PLA2c domain. Serine 228 (nucleophile) is an active-site residue. Phosphothreonine is present on threonine 268. The disordered stretch occupies residues 409 to 457 (GSQSRGSTMEEELENITTKHIVSNDSSDSDDESHEPKGTENEDAGSDYQ). Phosphoserine occurs at positions 434, 435, and 437. The residue at position 505 (serine 505) is a Phosphoserine; by MAPK. Position 515 is a phosphoserine (serine 515). A Glycyl lysine isopeptide (Lys-Gly) (interchain with G-Cter in SUMO2) cross-link involves residue lysine 541. The Proton acceptor role is filled by aspartate 549. Residue lysine 606 forms a Glycyl lysine isopeptide (Lys-Gly) (interchain with G-Cter in SUMO2) linkage. 2 positions are modified to phosphoserine: serine 727 and serine 729.

In terms of assembly, interacts with KAT5. Phosphorylated at both Ser-505 and Ser-727 in response to mitogenic stimuli.

It localises to the cytoplasm. It is found in the golgi apparatus membrane. Its subcellular location is the nucleus envelope. It catalyses the reaction a 1,2-diacyl-sn-glycero-3-phosphocholine + H2O = a 1-acyl-sn-glycero-3-phosphocholine + a fatty acid + H(+). It carries out the reaction a 1-O-alkyl-2-acyl-sn-glycero-3-phosphocholine + H2O = a 1-O-alkyl-sn-glycero-3-phosphocholine + a fatty acid + H(+). The catalysed reaction is a 1-acyl-sn-glycero-3-phosphocholine + H2O = sn-glycerol 3-phosphocholine + a fatty acid + H(+). The enzyme catalyses 1-hexadecanoyl-2-(5Z,8Z,11Z,14Z-eicosatetraenoyl)-sn-glycero-3-phosphocholine + H2O = 1-hexadecanoyl-sn-glycero-3-phosphocholine + (5Z,8Z,11Z,14Z)-eicosatetraenoate + H(+). It catalyses the reaction 1,2-di-(5Z,8Z,11Z,14Z-eicosatetraenoyl)-sn-glycero-3-phosphocholine + H2O = 1-(5Z,8Z,11Z,14Z-eicosatetraenoyl)-sn-glycero-3-phosphocholine + (5Z,8Z,11Z,14Z)-eicosatetraenoate + H(+). It carries out the reaction 1-octadecanoyl-2-(5Z,8Z,11Z,14Z-eicosatetraenoyl)-sn-glycero-3-phosphocholine + H2O = 1-octadecanoyl-sn-glycero-3-phosphocholine + (5Z,8Z,11Z,14Z)-eicosatetraenoate + H(+). The catalysed reaction is 1-hexadecanoyl-2-(9Z,12Z-octadecadienoyl)-sn-glycero-3-phosphocholine + H2O = (9Z,12Z)-octadecadienoate + 1-hexadecanoyl-sn-glycero-3-phosphocholine + H(+). The enzyme catalyses 1-octadecanoyl-2-(9Z,12Z,15Z-octadecatrienoyl)-sn-glycero-3-phosphocholine + H2O = (9Z,12Z,15Z)-octadecatrienoate + 1-octadecanoyl-sn-glycero-3-phosphocholine + H(+). It catalyses the reaction 1-(5Z,8Z,11Z,14Z-eicosatetraenoyl)-2-hexadecanoyl-sn-glycero-3-phosphocholine + H2O = 1-(5Z,8Z,11Z,14Z-eicosatetraenoyl)-sn-glycero-3-phosphocholine + hexadecanoate + H(+). It carries out the reaction 1-O-hexadecyl-2-(5Z,8Z,11Z,14Z)-eicosatetraenoyl-sn-glycero-3-phosphocholine + H2O = 1-O-hexadecyl-sn-glycero-3-phosphocholine + (5Z,8Z,11Z,14Z)-eicosatetraenoate + H(+). The catalysed reaction is 1,2-di-(9Z-octadecenoyl)-sn-glycero-3-phospho-(1'-sn-glycerol) + H2O = 1-(9Z-octadecenoyl)-sn-glycero-3-phospho-(1'-sn-glycerol) + (9Z)-octadecenoate + H(+). The enzyme catalyses 1-octadecanoyl-2-(5Z,8Z,11Z,14Z-eicosatetraenoyl)-sn-glycero-3-phosphate + H2O = 1-octadecanoyl-sn-glycero-3-phosphate + (5Z,8Z,11Z,14Z)-eicosatetraenoate + H(+). It catalyses the reaction 1-hexadecanoyl-sn-glycero-3-phosphocholine + H2O = sn-glycerol 3-phosphocholine + hexadecanoate + H(+). It carries out the reaction 2-(prostaglandin E2)-sn-glycero-3-phosphoethanolamine + H2O = sn-glycero-3-phosphoethanolamine + prostaglandin E2 + H(+). The catalysed reaction is 2-[(15S)-hydroxy-(5Z,8Z,11Z,13E)-eicosatetraenoyl]-sn-glycero-3-phosphocholine + H2O = (15S)-hydroxy-(5Z,8Z,11Z,13E)-eicosatetraenoate + sn-glycerol 3-phosphocholine + H(+). The enzyme catalyses 2-[(15R)-hydroxy-(5Z,8Z,11Z,13E)-eicosatetraenoyl]-sn-glycero-3-phosphocholine + H2O = (15R)-hydroxy-(5Z,8Z,11Z,13E)-eicosatetraenoate + sn-glycerol 3-phosphocholine + H(+). It catalyses the reaction 2-(prostaglandin E2)-sn-glycero-3-phosphocholine + H2O = prostaglandin E2 + sn-glycerol 3-phosphocholine + H(+). It carries out the reaction 2-[(11R)-hydroxy-(5Z,8Z,12E,14Z)-eicosatetraenoyl]-sn-glycero-3-phosphocholine + H2O = (11R)-hydroxy-(5Z,8Z,12E,14Z)-eicosatetraenoate + sn-glycerol 3-phosphocholine + H(+). The catalysed reaction is 1-(5Z,8Z,11Z,14Z-eicosatetraenoyl)-2-O-hexadecyl-sn-glycero-3-phosphocholine + H2O = 2-O-hexadecyl-sn-glycero-3-phosphocholine + (5Z,8Z,11Z,14Z)-eicosatetraenoate + H(+). The enzyme catalyses 1-octadecanoyl-2-(5Z,8Z,11Z,14Z-eicosatetraenoyl)-sn-glycero-3-phosphocholine + glycerol = 1-(5Z,8Z,11Z,14Z-eicosatetraenoyl)-glycerol + 1-octadecanoyl-sn-glycero-3-phosphocholine. It catalyses the reaction 1-octadecanoyl-2-(9Z,12Z,15Z-octadecatrienoyl)-sn-glycero-3-phosphocholine + glycerol = 1-(9Z,12Z,15Z-octadecatrienoyl)-glycerol + 1-octadecanoyl-sn-glycero-3-phosphocholine. The protein operates within membrane lipid metabolism; glycerophospholipid metabolism. It participates in lipid metabolism; arachidonate metabolism. It functions in the pathway lipid metabolism; prostaglandin biosynthesis. Its pathway is lipid metabolism; leukotriene B4 biosynthesis. With respect to regulation, activated by cytosolic calcium, which is necessary for binding to membrane lipids. Activated by phosphorylation in response to mitogenic stimuli. Has primarily calcium-dependent phospholipase and lysophospholipase activities, with a major role in membrane lipid remodeling and biosynthesis of lipid mediators of the inflammatory response. Plays an important role in embryo implantation and parturition through its ability to trigger prostanoid production. Preferentially hydrolyzes the ester bond of the fatty acyl group attached at sn-2 position of phospholipids (phospholipase A2 activity). Selectively hydrolyzes sn-2 arachidonoyl group from membrane phospholipids, providing the precursor for eicosanoid biosynthesis via the cyclooxygenase pathway. In an alternative pathway of eicosanoid biosynthesis, hydrolyzes sn-2 fatty acyl chain of eicosanoid lysophopholipids to release free bioactive eicosanoids. Hydrolyzes the ester bond of the fatty acyl group attached at sn-1 position of phospholipids (phospholipase A1 activity) only if an ether linkage rather than an ester linkage is present at the sn-2 position. This hydrolysis is not stereospecific. Has calcium-independent phospholipase A2 and lysophospholipase activities in the presence of phosphoinositides. Has O-acyltransferase activity. Catalyzes the transfer of fatty acyl chains from phospholipids to a primary hydroxyl group of glycerol (sn-1 or sn-3), potentially contributing to monoacylglycerol synthesis. This chain is Cytosolic phospholipase A2 (PLA2G4A), found in Pongo abelii (Sumatran orangutan).